A 550-amino-acid polypeptide reads, in one-letter code: Chaperonin GroEL (550 aa).

Residues 30-33 (TLGP), Lys51, 87-91 (DGTTT), Gly415, 479-481 (NAA), and Asp495 each bind ATP.

The protein belongs to the chaperonin (HSP60) family. Forms a cylinder of 14 subunits composed of two heptameric rings stacked back-to-back. Interacts with the co-chaperonin GroES.

The protein resides in the cytoplasm. The enzyme catalyses ATP + H2O + a folded polypeptide = ADP + phosphate + an unfolded polypeptide.. In terms of biological role, together with its co-chaperonin GroES, plays an essential role in assisting protein folding. The GroEL-GroES system forms a nano-cage that allows encapsulation of the non-native substrate proteins and provides a physical environment optimized to promote and accelerate protein folding. The sequence is that of Chaperonin GroEL from Aromatoleum aromaticum (strain DSM 19018 / LMG 30748 / EbN1) (Azoarcus sp. (strain EbN1)).